The chain runs to 162 residues: Transcription elongation factor GreA (162 aa).

Positions 45-65 (NAEYHAAKERQLFIEARINEL) form a coiled coil.

Belongs to the GreA/GreB family.

Necessary for efficient RNA polymerase transcription elongation past template-encoded arresting sites. The arresting sites in DNA have the property of trapping a certain fraction of elongating RNA polymerases that pass through, resulting in locked ternary complexes. Cleavage of the nascent transcript by cleavage factors such as GreA or GreB allows the resumption of elongation from the new 3'terminus. GreA releases sequences of 2 to 3 nucleotides. This is Transcription elongation factor GreA from Wolinella succinogenes (strain ATCC 29543 / DSM 1740 / CCUG 13145 / JCM 31913 / LMG 7466 / NCTC 11488 / FDC 602W) (Vibrio succinogenes).